Reading from the N-terminus, the 188-residue chain is Elongation factor P (188 aa).

Belongs to the elongation factor P family.

It localises to the cytoplasm. The protein operates within protein biosynthesis; polypeptide chain elongation. In terms of biological role, involved in peptide bond synthesis. Stimulates efficient translation and peptide-bond synthesis on native or reconstituted 70S ribosomes in vitro. Probably functions indirectly by altering the affinity of the ribosome for aminoacyl-tRNA, thus increasing their reactivity as acceptors for peptidyl transferase. The chain is Elongation factor P from Phocaeicola vulgatus (strain ATCC 8482 / DSM 1447 / JCM 5826 / CCUG 4940 / NBRC 14291 / NCTC 11154) (Bacteroides vulgatus).